Here is a 367-residue protein sequence, read N- to C-terminus: Pectate lyase 1 (367 aa).

Positions 1 to 21 are cleaved as a signal peptide; sequence MASPCLIAVLVFLCAIVSCYS. An intrachain disulfide couples cysteine 28 to cysteine 45. The tract at residues 38 to 305 is beta-helix; that stretch reads NRMKLADCAV…YKKEVTKRIG (268 aa). Residues 92–104 form an igE-binding. Binds to IgE in 5 out of 7 patients tested region; that stretch reads IFSQNMNIKLKMP. An intrachain disulfide couples cysteine 128 to cysteine 147. N-linked (GlcNAc...) asparagine glycosylation is present at asparagine 148. Aspartate 170 serves as a coordination point for Ca(2+). Asparagine 178 is a glycosylation site (N-linked (GlcNAc...) asparagine). The Ca(2+) site is built by aspartate 194 and aspartate 198. The igE-binding. Binds to IgE in 6 out of 7 patients tested stretch occupies residues 239–250; it reads AFNQFGPNAGQR. Arginine 250 is a catalytic residue. The tract at residues 251–258 is igE-binding. Binds to IgE in 5 out of 7 patients tested; it reads MPRARYGL. The cysteines at positions 306 and 312 are disulfide-linked. The tract at residues 317-327 is igE-binding. Binds to IgE in 3 out of 7 patients tested; that stretch reads WRSTRDAFING.

The protein belongs to the polysaccharide lyase 1 family. Amb a subfamily. Ca(2+) serves as cofactor. In terms of processing, N-glycosylated; consists of complex-type N-glycans containing the Lewis a antigen (Galbeta1-3(Fucalpha1-4)GlcNAcbeta1-). As to expression, expressed in pollen (at protein level).

It catalyses the reaction Eliminative cleavage of (1-&gt;4)-alpha-D-galacturonan to give oligosaccharides with 4-deoxy-alpha-D-galact-4-enuronosyl groups at their non-reducing ends.. It participates in glycan metabolism; pectin degradation; 2-dehydro-3-deoxy-D-gluconate from pectin: step 2/5. Its function is as follows. Has low pectate lyase activity. The polypeptide is Pectate lyase 1 (Juniperus ashei (Ozark white cedar)).